The chain runs to 174 residues: MAAANRGSKPRVRSIRFAAGHDAEGSQSHVHFDEKLHDSVVMVTQESDNSFLVKVGFLKILHRYEITFTLPPVRRLSKDIRETPVHSLHLKLLSVTPTSEGYSIKCEYSAHKEGVLKEEMLLACEGDIGTCVRVTVQARVMDRHHGTPMLLDGVKCVGAELEYDSEQSDWLGFD.

At alanine 2 the chain carries N-acetylalanine. A Phosphothreonine modification is found at threonine 147.

The protein belongs to the ADISSP family. In terms of tissue distribution, expression is adipose-specific and highly brown adipose tissue-enriched.

It is found in the secreted. Adipocyte-secreted protein (adipokine) that acts as a key regulator for white adipose tissue (WAT) thermogenesis and glucose homeostasis at least in part through activation of protein kinase A (PKA). In Mus musculus (Mouse), this protein is Adipose-secreted signaling protein.